The chain runs to 254 residues: 5-oxoprolinase subunit A (254 aa).

It belongs to the LamB/PxpA family. In terms of assembly, forms a complex composed of PxpA, PxpB and PxpC.

The enzyme catalyses 5-oxo-L-proline + ATP + 2 H2O = L-glutamate + ADP + phosphate + H(+). In terms of biological role, catalyzes the cleavage of 5-oxoproline to form L-glutamate coupled to the hydrolysis of ATP to ADP and inorganic phosphate. This chain is 5-oxoprolinase subunit A, found in Heliobacterium modesticaldum (strain ATCC 51547 / Ice1).